The sequence spans 80 residues: Protein FAM229B (80 aa).

A disordered region spans residues 1-44 (MPFRFGTQPRRFPVEGGDSSIGLEPGLSSSATCNGKEMSPTRQL).

The protein belongs to the FAM229 family.

The polypeptide is Protein FAM229B (FAM229B) (Bos taurus (Bovine)).